Reading from the N-terminus, the 118-residue chain is uncharacterized protein (118 aa).

Residues 21–38 (IVYFFFFFGLETFFSIIN) form a helical membrane-spanning segment.

Its subcellular location is the membrane. This is an uncharacterized protein from Dictyostelium discoideum (Social amoeba).